We begin with the raw amino-acid sequence, 186 residues long: Peptide deformylase (186 aa).

Fe cation is bound by residues Cys-113 and His-156. The active site involves Glu-157. His-160 contributes to the Fe cation binding site.

This sequence belongs to the polypeptide deformylase family. The cofactor is Fe(2+).

It carries out the reaction N-terminal N-formyl-L-methionyl-[peptide] + H2O = N-terminal L-methionyl-[peptide] + formate. Removes the formyl group from the N-terminal Met of newly synthesized proteins. Requires at least a dipeptide for an efficient rate of reaction. N-terminal L-methionine is a prerequisite for activity but the enzyme has broad specificity at other positions. The sequence is that of Peptide deformylase from Lactiplantibacillus plantarum (strain ATCC BAA-793 / NCIMB 8826 / WCFS1) (Lactobacillus plantarum).